The chain runs to 402 residues: Tryptophan synthase beta chain (402 aa).

Lysine 88 bears the N6-(pyridoxal phosphate)lysine mark.

This sequence belongs to the TrpB family. Tetramer of two alpha and two beta chains. Requires pyridoxal 5'-phosphate as cofactor.

It catalyses the reaction (1S,2R)-1-C-(indol-3-yl)glycerol 3-phosphate + L-serine = D-glyceraldehyde 3-phosphate + L-tryptophan + H2O. The protein operates within amino-acid biosynthesis; L-tryptophan biosynthesis; L-tryptophan from chorismate: step 5/5. The beta subunit is responsible for the synthesis of L-tryptophan from indole and L-serine. In Pasteurella multocida (strain Pm70), this protein is Tryptophan synthase beta chain (trpB).